The sequence spans 409 residues: MFRTCTKIGTVPKVLVNQKGLIDGLRRVTTDATTSRANPAHVPEEHDKPFPVKLDDSVFEGYKIDVPSTEIEVTKGELLGLYEKMVTIRRLELACDALYKAKKIRGFCHLSIGQEAVAAGIEGAITLDDSIITSYRCHGFAYTRGLSIRSIIGELMGRQCGASKGKGGSMHIFAKNFYGGNGIVGAQIPLGAGIGFAQKYLEKPTTTFALYGDGASNQGQAFEAFNMAKLWGLPVIFACENNKYGMGTSAERSSAMTEFYKRGQYIPGLLVNGMDVLAVLQASKFAKKYTVENSQPLLMEFVTYRYGGHSMSDPGTTYRSREEVQKVRAARDPIEGLKKHIMEWGVANANELKNIEKRIRGMVDEEVRIAEESPFPDPIEESLFSDVYVAGTEPAYARGRNSLEYHQYK.

Thr-6 carries the phosphothreonine modification. Positions 109, 135, 136, 174, 182, 184, 213, 214, 215, 242, and 244 each coordinate pyruvate. Thiamine diphosphate-binding residues include Tyr-135 and Arg-136. Residues Gly-182, Val-184, Asp-213, Gly-214, Ala-215, and Asn-242 each contribute to the thiamine diphosphate site. Asp-213 contacts Mg(2+). Asn-242 and Tyr-244 together coordinate Mg(2+). A Phosphotyrosine modification is found at Tyr-306. His-309 is a binding site for thiamine diphosphate. 2 positions are modified to phosphoserine: Ser-310 and Ser-312.

As to quaternary structure, tetramer of 2 alpha and 2 beta subunits. The cofactor is thiamine diphosphate. Mg(2+) serves as cofactor.

It localises to the mitochondrion matrix. The enzyme catalyses N(6)-[(R)-lipoyl]-L-lysyl-[protein] + pyruvate + H(+) = N(6)-[(R)-S(8)-acetyldihydrolipoyl]-L-lysyl-[protein] + CO2. Its activity is regulated as follows. E1 activity is regulated by phosphorylation (inactivation) and dephosphorylation (activation) of the alpha subunit. In terms of biological role, the pyruvate dehydrogenase complex catalyzes the overall conversion of pyruvate to acetyl-CoA and CO(2). It contains multiple copies of three enzymatic components: pyruvate dehydrogenase (E1), dihydrolipoamide acetyltransferase (E2) and lipoamide dehydrogenase (E3). This chain is Pyruvate dehydrogenase E1 component subunit alpha, mitochondrial (pda1), found in Schizosaccharomyces pombe (strain 972 / ATCC 24843) (Fission yeast).